A 393-amino-acid chain; its full sequence is NADH-quinone oxidoreductase subunit D (393 aa).

It belongs to the complex I 49 kDa subunit family. As to quaternary structure, NDH-1 is composed of 14 different subunits. Subunits NuoB, C, D, E, F, and G constitute the peripheral sector of the complex.

Its subcellular location is the cell inner membrane. It carries out the reaction a quinone + NADH + 5 H(+)(in) = a quinol + NAD(+) + 4 H(+)(out). In terms of biological role, NDH-1 shuttles electrons from NADH, via FMN and iron-sulfur (Fe-S) centers, to quinones in the respiratory chain. The immediate electron acceptor for the enzyme in this species is believed to be ubiquinone. Couples the redox reaction to proton translocation (for every two electrons transferred, four hydrogen ions are translocated across the cytoplasmic membrane), and thus conserves the redox energy in a proton gradient. The protein is NADH-quinone oxidoreductase subunit D of Ehrlichia chaffeensis (strain ATCC CRL-10679 / Arkansas).